The chain runs to 438 residues: Tol-Pal system protein TolB (438 aa).

Residues 1-35 (MITMKNILKLRATGLLLLLLLMISVLGNGIGQAMA) form the signal peptide.

The protein belongs to the TolB family. As to quaternary structure, the Tol-Pal system is composed of five core proteins: the inner membrane proteins TolA, TolQ and TolR, the periplasmic protein TolB and the outer membrane protein Pal. They form a network linking the inner and outer membranes and the peptidoglycan layer.

The protein localises to the periplasm. Functionally, part of the Tol-Pal system, which plays a role in outer membrane invagination during cell division and is important for maintaining outer membrane integrity. This is Tol-Pal system protein TolB from Desulfotalea psychrophila (strain LSv54 / DSM 12343).